The sequence spans 534 residues: Phenylalanine N-monooxygenase CYP79D16 (534 aa).

Residues 1-21 (MEANVGFLTLCLAITLVRFLM) form the signal peptide. C472 contacts heme. N-linked (GlcNAc...) asparagine glycosylation is present at N500.

This sequence belongs to the cytochrome P450 family. Heme serves as cofactor. In terms of tissue distribution, expressed in seedlings.

It carries out the reaction L-phenylalanine + 2 reduced [NADPH--hemoprotein reductase] + 2 O2 = (E)-phenylacetaldehyde oxime + 2 oxidized [NADPH--hemoprotein reductase] + CO2 + 3 H2O + 2 H(+). Its function is as follows. Involved in L-phenylalanine-derived cyanogenic glycoside biosynthesis, including prunasin and amygdalin defensive agents. Catalyzes the conversion of L-phenylalanine (Phe) into phenylacetaldoxime (PAOx). Cannot use tyrosine (Tyr), tryptophan (Trp) and valine (Val) as substrates. This chain is Phenylalanine N-monooxygenase CYP79D16, found in Prunus mume (Japanese apricot).